The chain runs to 163 residues: uncharacterized protein (163 aa).

Basic and acidic residues predominate over residues 1–10 (MTHPLPHDSH). Disordered stretches follow at residues 1–21 (MTHP…VNKS) and 71–112 (SKQP…EQRR). Residues 90 to 105 (PASSLQDHSRLTSLSR) show a composition bias toward polar residues.

This is an uncharacterized protein from Homo sapiens (Human).